The following is a 508-amino-acid chain: Cytochrome P450 monooxygenase aflV (508 aa).

Residues 18 to 38 traverse the membrane as a helical segment; it reads LTWWFLAVGGAWIVSKIIKIL. Residues asparagine 192, asparagine 209, asparagine 302, and asparagine 408 are each glycosylated (N-linked (GlcNAc...) asparagine). Cysteine 453 contributes to the heme binding site.

It belongs to the cytochrome P450 family. Requires heme as cofactor.

It is found in the membrane. Its pathway is mycotoxin biosynthesis; aflatoxin biosynthesis. In terms of biological role, cytochrome P450 monooxygenase; part of the gene cluster that mediates the biosynthesis of aflatoxins, a group of polyketide-derived furanocoumarins, and part of the most toxic and carcinogenic compounds among the known mycotoxins. The four major aflatoxins produced by A.parasiticus are aflatoxin B1 (AFB1), aflatoxin B2 (AFB2), aflatoxin G1 (AFG1) and aflatoxin G2 (AFG2). The role of the cytochrome P450 monooxygenase aflV in aflatoxin biosynthesis has still to be characterized. The biosynthesis of aflatoxins begins with the norsolorinic acid synthase aflC that combines a hexanoyl starter unit produced by the fatty acid synthase aflA/aflB and 7 malonyl-CoA extender units to synthesize the precursor NOR. The second step is the conversion of NOR to averantin and requires the norsolorinic acid ketoreductase aflD, which catalyzes the dehydration of norsolorinic acid to form (1'S)-averantin. The norsolorinic acid reductases aflE and aflF may also play a role in the conversion of NOR to AVN. The cytochrome P450 monooxygenase aflG then catalyzes the hydroxylation of AVN to 5'hydroxyaverantin (HAVN). The next step is performed by the 5'-hydroxyaverantin dehydrogenase aflH that transforms HAVN to 5'-oxoaverantin (OAVN) which is further converted to averufin (AVF) by aflK that plays a dual role in the pathway, as a 5'-oxoaverantin cyclase that mediates conversion of 5'-oxoaverantin, as well as a versicolorin B synthase in a later step in the pathway. The averufin oxidase aflI catalyzes the conversion of AVF to versiconal hemiacetal acetate (VHA). VHA is then the substrate for the versiconal hemiacetal acetate esterase aflJ to yield versiconal (VAL). Versicolorin B synthase aflK then converts VAL to versicolorin B (VERB) by closing the bisfuran ring of aflatoxin which is required for DNA-binding, thus giving to aflatoxin its activity as a mutagen. Then, the activity of the versicolorin B desaturase aflL leads to versicolorin A (VERA). A branch point starts from VERB since it can also be converted to dihydrodemethylsterigmatocystin (DMDHST), probably also by aflL, VERA being a precursor for aflatoxins B1 and G1, and DMDHST for aflatoxins B2 and G2. Next, the versicolorin reductase aflM and the cytochrome P450 monooxygenase aflN are involved in conversion of VERA to demethylsterigmatocystin (DMST). AflX and aflY seem also involved in this step, through probable aflX-mediated epoxide ring-opening step following versicolorin A oxidation and aflY-mediated Baeyer-Villiger oxidation required for the formation of the xanthone ring. The methyltransferase aflO then leads to the modification of DMST to sterigmatocystin (ST), and of DMDHST to dihydrosterigmatocystin (DHST). Both ST and DHST are then substrates of the O-methyltransferase aflP to yield O-methylsterigmatocystin (OMST) and dihydro-O-methylsterigmatocystin (DHOMST), respectively. Finally OMST is converted to aflatoxins B1 and G1, and DHOMST to aflatoxins B2 and G2, via the action of several enzymes including O-methylsterigmatocystin oxidoreductase aflQ, the cytochrome P450 monooxygenase aflU, but also the NADH-dependent flavin oxidoreductase nadA which is specifically required for the synthesis of AFG1. In Aspergillus parasiticus (strain ATCC 56775 / NRRL 5862 / SRRC 143 / SU-1), this protein is Cytochrome P450 monooxygenase aflV.